The following is an 80-amino-acid chain: Styelin-C (80 aa).

The first 22 residues, 1-22 (MQMKATILIVLVALFMIQQSEA), serve as a signal peptide directing secretion. Trp24 is subject to 6'-bromotryptophan. Leu53 carries the post-translational modification Leucine amide. Positions 55-80 (DMTDEEFQEFMQDIEQAREEELLSRQ) are cleaved as a propeptide — removed in mature form.

It is found in the secreted. Functionally, bactericidal against several Gram-positive and Gram-negative bacteria. The chain is Styelin-C from Styela clava (Sea squirt).